Here is a 70-residue protein sequence, read N- to C-terminus: MKSLHDSLSVTDIKRSRLQISMQTLCPFLEDTLQCKSLLSLVVERCTCNAKVVSSILTGGKIFSLKLTLI.

This is an uncharacterized protein from Saccharomyces cerevisiae (strain ATCC 204508 / S288c) (Baker's yeast).